The chain runs to 162 residues: ATP synthase subunit delta, mitochondrial (162 aa).

The N-terminal 25 residues, 1 to 25 (MSSLRLLASAARRATTHVAYTRRGY), are a transit peptide targeting the mitochondrion.

Belongs to the ATPase epsilon chain family. As to quaternary structure, F-type ATPases have 2 components, CF(1) - the catalytic core - and CF(0) - the membrane proton channel. CF(1) has five subunits: alpha(3), beta(3), gamma(1), delta(1), epsilon(1). CF(0) has three main subunits: a, b and c.

Its subcellular location is the mitochondrion. The protein localises to the mitochondrion inner membrane. Mitochondrial membrane ATP synthase (F(1)F(0) ATP synthase or Complex V) produces ATP from ADP in the presence of a proton gradient across the membrane which is generated by electron transport complexes of the respiratory chain. F-type ATPases consist of two structural domains, F(1) - containing the extramembraneous catalytic core, and F(0) - containing the membrane proton channel, linked together by a central stalk and a peripheral stalk. During catalysis, ATP turnover in the catalytic domain of F(1) is coupled via a rotary mechanism of the central stalk subunits to proton translocation. Part of the complex F(1) domain and of the central stalk which is part of the complex rotary element. Rotation of the central stalk against the surrounding alpha(3)beta(3) subunits leads to hydrolysis of ATP in three separate catalytic sites on the beta subunits. This Agaricus bisporus (White button mushroom) protein is ATP synthase subunit delta, mitochondrial (atpD).